The following is a 387-amino-acid chain: Putative ankyrin repeat protein RBE_0984 (387 aa).

ANK repeat units follow at residues 50-79 (YGNTPLSLALNKKLEAVCEVLVSRMSDKDI), 88-119 (HRETYFTLAAIKGFKGVCENLAPRMSNEAINV), 123-154 (RKHTALTLAADKNLPQVCIKLIPIMFDEVINV), 159-188 (HKDSALRKAIWNDLDVVCQMLIPVTSKENI), and 210-239 (VCKMLISRMIEDNSLDIINHVISKGELKGE). 2 coiled-coil regions span residues 251-278 (FEDICELLQKSHEEYKEQKQKENEKKCE) and 311-352 (SISA…ALEK).

This chain is Putative ankyrin repeat protein RBE_0984, found in Rickettsia bellii (strain RML369-C).